Consider the following 238-residue polypeptide: 7-cyano-7-deazaguanine synthase 1 (238 aa).

14-24 (FSGGQDSATCL) contacts ATP. Zn(2+) is bound by residues Cys-202, Cys-217, Cys-220, and Cys-223.

The protein belongs to the QueC family. Zn(2+) serves as cofactor.

The enzyme catalyses 7-carboxy-7-deazaguanine + NH4(+) + ATP = 7-cyano-7-deazaguanine + ADP + phosphate + H2O + H(+). Its pathway is purine metabolism; 7-cyano-7-deazaguanine biosynthesis. Catalyzes the ATP-dependent conversion of 7-carboxy-7-deazaguanine (CDG) to 7-cyano-7-deazaguanine (preQ(0)). The sequence is that of 7-cyano-7-deazaguanine synthase 1 from Rhodopseudomonas palustris (strain HaA2).